Reading from the N-terminus, the 701-residue chain is Elongation factor G (701 aa).

Positions 11-287 (TKVRNIGIMA…AVIDYLPSPL (277 aa)) constitute a tr-type G domain. GTP is bound by residues 20–27 (AHIDAGKT), 84–88 (DTPGH), and 138–141 (NKMD).

It belongs to the TRAFAC class translation factor GTPase superfamily. Classic translation factor GTPase family. EF-G/EF-2 subfamily.

It localises to the cytoplasm. Functionally, catalyzes the GTP-dependent ribosomal translocation step during translation elongation. During this step, the ribosome changes from the pre-translocational (PRE) to the post-translocational (POST) state as the newly formed A-site-bound peptidyl-tRNA and P-site-bound deacylated tRNA move to the P and E sites, respectively. Catalyzes the coordinated movement of the two tRNA molecules, the mRNA and conformational changes in the ribosome. The chain is Elongation factor G from Mycobacterium marinum (strain ATCC BAA-535 / M).